The primary structure comprises 64 residues: Defensin beta 4A (64 aa).

Positions 1 to 23 (MRVLYLLFSFLFIFLMPLPGVFG) are cleaved as a signal peptide. 3 cysteine pairs are disulfide-bonded: Cys-31–Cys-60, Cys-38–Cys-53, and Cys-43–Cys-61. The interval 33–48 (KNGAICHPVFCPRRYK) is phosphatidylinositol 4,5-bisphosphate (PIP2) binding.

It belongs to the beta-defensin family. LAP/TAP subfamily. Monomer. Homodimer.

The protein localises to the secreted. Its function is as follows. Exhibits antimicrobial activity against Gram-negative bacteria and Gram-positive bacteria, with highest activity against Gram-negative bacteria. Antimicrobial activity against P.aruginosa seems to be salt-sensitive and is reduced with high salt concentrations greater than 25 mM. Also exhibits antimicrobial activity against the yeast C.albicans. Permeabilizes C.albicans cell membranes via targeting plasma membrane lipid phosphatidylinositol 4,5-bisphosphate (PIP2), thereby leading to cell fragmentation and cell death. Acts as a ligand for C-C chemokine receptor CCR6. Binds to CCR6 and induces chemotactic activity of CCR6-expressing cells, such as immature dendritic cells and memory T cells. This Macaca mulatta (Rhesus macaque) protein is Defensin beta 4A (DEFB4A).